Here is a 664-residue protein sequence, read N- to C-terminus: Fructose-1,6-bisphosphatase class 3 (664 aa).

This sequence belongs to the FBPase class 3 family. Mn(2+) serves as cofactor.

It catalyses the reaction beta-D-fructose 1,6-bisphosphate + H2O = beta-D-fructose 6-phosphate + phosphate. Its pathway is carbohydrate biosynthesis; gluconeogenesis. This Bacteroides thetaiotaomicron (strain ATCC 29148 / DSM 2079 / JCM 5827 / CCUG 10774 / NCTC 10582 / VPI-5482 / E50) protein is Fructose-1,6-bisphosphatase class 3.